Reading from the N-terminus, the 205-residue chain is Holliday junction branch migration complex subunit RuvA (205 aa).

Residues 1–64 (MIGRLNGILV…EDAQLLFGFN (64 aa)) form a domain I region. Positions 65–143 (NKVERALFRE…NWGNDLFTPF (79 aa)) are domain II. A flexible linker region spans residues 144–156 (SDSAVIEPFSDAT). The interval 157–205 (IANNAADDAVSALVSLGYKLPQAQKAVKSVSKPDMSTEVLIKESLKSML) is domain III.

It belongs to the RuvA family. Homotetramer. Forms an RuvA(8)-RuvB(12)-Holliday junction (HJ) complex. HJ DNA is sandwiched between 2 RuvA tetramers; dsDNA enters through RuvA and exits via RuvB. An RuvB hexamer assembles on each DNA strand where it exits the tetramer. Each RuvB hexamer is contacted by two RuvA subunits (via domain III) on 2 adjacent RuvB subunits; this complex drives branch migration. In the full resolvosome a probable DNA-RuvA(4)-RuvB(12)-RuvC(2) complex forms which resolves the HJ.

It is found in the cytoplasm. Functionally, the RuvA-RuvB-RuvC complex processes Holliday junction (HJ) DNA during genetic recombination and DNA repair, while the RuvA-RuvB complex plays an important role in the rescue of blocked DNA replication forks via replication fork reversal (RFR). RuvA specifically binds to HJ cruciform DNA, conferring on it an open structure. The RuvB hexamer acts as an ATP-dependent pump, pulling dsDNA into and through the RuvAB complex. HJ branch migration allows RuvC to scan DNA until it finds its consensus sequence, where it cleaves and resolves the cruciform DNA. This is Holliday junction branch migration complex subunit RuvA from Pseudoalteromonas translucida (strain TAC 125).